The following is a 268-amino-acid chain: Tryptophan synthase alpha chain (268 aa).

Active-site proton acceptor residues include Glu49 and Asp60.

The protein belongs to the TrpA family. As to quaternary structure, tetramer of two alpha and two beta chains.

It catalyses the reaction (1S,2R)-1-C-(indol-3-yl)glycerol 3-phosphate + L-serine = D-glyceraldehyde 3-phosphate + L-tryptophan + H2O. The protein operates within amino-acid biosynthesis; L-tryptophan biosynthesis; L-tryptophan from chorismate: step 5/5. Its function is as follows. The alpha subunit is responsible for the aldol cleavage of indoleglycerol phosphate to indole and glyceraldehyde 3-phosphate. This chain is Tryptophan synthase alpha chain, found in Vibrio cholerae serotype O1 (strain ATCC 39541 / Classical Ogawa 395 / O395).